The chain runs to 377 residues: Chaperone protein DnaJ (377 aa).

The J domain occupies aspartate 5–glycine 70. A CR-type zinc finger spans residues glycine 137 to threonine 215. Zn(2+) contacts are provided by cysteine 150, cysteine 153, cysteine 167, cysteine 170, cysteine 189, cysteine 192, cysteine 203, and cysteine 206. 4 CXXCXGXG motif repeats span residues cysteine 150 to glycine 157, cysteine 167 to glycine 174, cysteine 189 to glycine 196, and cysteine 203 to glycine 210.

Belongs to the DnaJ family. As to quaternary structure, homodimer. Zn(2+) serves as cofactor.

Its subcellular location is the cytoplasm. Participates actively in the response to hyperosmotic and heat shock by preventing the aggregation of stress-denatured proteins and by disaggregating proteins, also in an autonomous, DnaK-independent fashion. Unfolded proteins bind initially to DnaJ; upon interaction with the DnaJ-bound protein, DnaK hydrolyzes its bound ATP, resulting in the formation of a stable complex. GrpE releases ADP from DnaK; ATP binding to DnaK triggers the release of the substrate protein, thus completing the reaction cycle. Several rounds of ATP-dependent interactions between DnaJ, DnaK and GrpE are required for fully efficient folding. Also involved, together with DnaK and GrpE, in the DNA replication of plasmids through activation of initiation proteins. This is Chaperone protein DnaJ from Paraburkholderia phymatum (strain DSM 17167 / CIP 108236 / LMG 21445 / STM815) (Burkholderia phymatum).